The following is a 147-amino-acid chain: Peptidyl-lysine N-acetyltransferase YjaB (147 aa).

One can recognise an N-acetyltransferase domain in the interval 3–144; it reads ISIRRSRHEE…KPYPLLNLAY (142 aa).

This sequence belongs to the acetyltransferase family.

It catalyses the reaction L-lysyl-[protein] + acetyl-CoA = N(6)-acetyl-L-lysyl-[protein] + CoA + H(+). N-epsilon-lysine acetyltransferase that catalyzes acetylation of a large number of proteins. Binds acetyl-CoA. The polypeptide is Peptidyl-lysine N-acetyltransferase YjaB (yjaB) (Escherichia coli (strain K12)).